Here is a 91-residue protein sequence, read N- to C-terminus: MRWPVIILAVLVVVLQYPLWLGKGGWLRVWEVDRKLHEQREENTRLEERNAGLDAEVRDLKSGNEAIEERARLELGLTKPNEIFVQVPQKH.

At 1–3 (MRW) the chain is on the cytoplasmic side. A helical transmembrane segment spans residues 4–21 (PVIILAVLVVVLQYPLWL). Topologically, residues 22–91 (GKGGWLRVWE…EIFVQVPQKH (70 aa)) are periplasmic. Residues 28-72 (RVWEVDRKLHEQREENTRLEERNAGLDAEVRDLKSGNEAIEERAR) adopt a coiled-coil conformation.

Belongs to the FtsB family. As to quaternary structure, part of a complex composed of FtsB, FtsL and FtsQ.

It is found in the cell inner membrane. Functionally, essential cell division protein. May link together the upstream cell division proteins, which are predominantly cytoplasmic, with the downstream cell division proteins, which are predominantly periplasmic. The polypeptide is Cell division protein FtsB (Azoarcus sp. (strain BH72)).